The chain runs to 315 residues: Large ribosomal subunit protein uL29m (315 aa).

The protein belongs to the universal ribosomal protein uL29 family. In terms of assembly, component of the mitochondrial large ribosomal subunit. Mature mitochondrial ribosomes consist of a small (37S) and a large (54S) subunit. The 37S subunit contains at least 33 different proteins and 1 molecule of RNA (15S). The 54S subunit contains at least 45 different proteins and 1 molecule of RNA (21S).

The protein localises to the mitochondrion. This chain is Large ribosomal subunit protein uL29m (MRPL4), found in Candida glabrata (strain ATCC 2001 / BCRC 20586 / JCM 3761 / NBRC 0622 / NRRL Y-65 / CBS 138) (Yeast).